We begin with the raw amino-acid sequence, 485 residues long: Pyruvate kinase (485 aa).

A substrate-binding site is contributed by Arg33. Residues Asn35, Ser37, Asp67, and Thr68 each contribute to the K(+) site. An ATP-binding site is contributed by 35-38; sequence NFSH. The ATP site is built by Arg74 and Lys155. Position 221 (Glu221) interacts with Mg(2+). Substrate contacts are provided by Gly244, Asp245, and Thr277. Residue Asp245 coordinates Mg(2+).

It belongs to the pyruvate kinase family. In terms of assembly, homotetramer. Requires Mg(2+) as cofactor. It depends on K(+) as a cofactor.

The catalysed reaction is pyruvate + ATP = phosphoenolpyruvate + ADP + H(+). The protein operates within carbohydrate degradation; glycolysis; pyruvate from D-glyceraldehyde 3-phosphate: step 5/5. The sequence is that of Pyruvate kinase (pyk) from Chlamydia trachomatis serovar L2 (strain ATCC VR-902B / DSM 19102 / 434/Bu).